The primary structure comprises 152 residues: Large ribosomal subunit protein bL9 (152 aa).

This sequence belongs to the bacterial ribosomal protein bL9 family.

Functionally, binds to the 23S rRNA. This chain is Large ribosomal subunit protein bL9, found in Mycobacterium leprae (strain Br4923).